Consider the following 534-residue polypeptide: ATP synthase subunit beta 2 (534 aa).

185-192 (GGAGVGKT) contacts ATP. A compositionally biased stretch (basic and acidic residues) spans 494-505 (AAAREADARREA). Positions 494-534 (AAAREADARREAAAAASGAGPGTTSDPASGSAEPQGARHGR) are disordered.

Belongs to the ATPase alpha/beta chains family. F-type ATPases have 2 components, CF(1) - the catalytic core - and CF(0) - the membrane proton channel. CF(1) has five subunits: alpha(3), beta(3), gamma(1), delta(1), epsilon(1). CF(0) has three main subunits: a(1), b(2) and c(9-12). The alpha and beta chains form an alternating ring which encloses part of the gamma chain. CF(1) is attached to CF(0) by a central stalk formed by the gamma and epsilon chains, while a peripheral stalk is formed by the delta and b chains.

It is found in the cell inner membrane. It catalyses the reaction ATP + H2O + 4 H(+)(in) = ADP + phosphate + 5 H(+)(out). Functionally, produces ATP from ADP in the presence of a proton gradient across the membrane. The catalytic sites are hosted primarily by the beta subunits. The protein is ATP synthase subunit beta 2 of Burkholderia mallei (strain NCTC 10247).